A 333-amino-acid polypeptide reads, in one-letter code: Ketol-acid reductoisomerase (NADP(+)) (333 aa).

The KARI N-terminal Rossmann domain occupies 1-179 (MFYDDNADLS…GGTRAGVIKT (179 aa)). NADP(+) contacts are provided by residues 22–25 (YGSQ), S48, S50, and 80–83 (DTAQ). Residue H105 is part of the active site. Position 131 (G131) interacts with NADP(+). The KARI C-terminal knotted domain occupies 180–325 (TFKDETETDL…KKLRDLMSWV (146 aa)). Mg(2+) is bound by residues D188, E192, E224, and E228. S249 contacts substrate.

It belongs to the ketol-acid reductoisomerase family. Requires Mg(2+) as cofactor.

It catalyses the reaction (2R)-2,3-dihydroxy-3-methylbutanoate + NADP(+) = (2S)-2-acetolactate + NADPH + H(+). The enzyme catalyses (2R,3R)-2,3-dihydroxy-3-methylpentanoate + NADP(+) = (S)-2-ethyl-2-hydroxy-3-oxobutanoate + NADPH + H(+). It functions in the pathway amino-acid biosynthesis; L-isoleucine biosynthesis; L-isoleucine from 2-oxobutanoate: step 2/4. Its pathway is amino-acid biosynthesis; L-valine biosynthesis; L-valine from pyruvate: step 2/4. Its function is as follows. Involved in the biosynthesis of branched-chain amino acids (BCAA). Catalyzes an alkyl-migration followed by a ketol-acid reduction of (S)-2-acetolactate (S2AL) to yield (R)-2,3-dihydroxy-isovalerate. In the isomerase reaction, S2AL is rearranged via a Mg-dependent methyl migration to produce 3-hydroxy-3-methyl-2-ketobutyrate (HMKB). In the reductase reaction, this 2-ketoacid undergoes a metal-dependent reduction by NADPH to yield (R)-2,3-dihydroxy-isovalerate. The chain is Ketol-acid reductoisomerase (NADP(+)) from Mycobacterium leprae (strain TN).